Here is a 368-residue protein sequence, read N- to C-terminus: Mediator of RNA polymerase II transcription subunit 2 (368 aa).

Basic and acidic residues predominate over residues 112–163 (KKKEQEEEEEKKKKQKEEEEKRKKELEEQERKKKEQEEEEKRRRQQEQDGDK). Disordered regions lie at residues 112–231 (KKKE…DSQS) and 265–308 (SNAN…NNET). Over residues 177–192 (DLDTSQPGTSGQNDIK) the composition is skewed to polar residues. Over residues 265–290 (SNANATTNSVPNNNNPATNDSNMNND) the composition is skewed to low complexity.

It belongs to the Mediator complex subunit 2 family. Component of the Mediator complex.

It is found in the nucleus. Its function is as follows. Component of the Mediator complex, a coactivator involved in the regulated transcription of nearly all RNA polymerase II-dependent genes. Mediator functions as a bridge to convey information from gene-specific regulatory proteins to the basal RNA polymerase II transcription machinery. Mediator is recruited to promoters by direct interactions with regulatory proteins and serves as a scaffold for the assembly of a functional preinitiation complex with RNA polymerase II and the general transcription factors. The sequence is that of Mediator of RNA polymerase II transcription subunit 2 (MED2) from Candida glabrata (strain ATCC 2001 / BCRC 20586 / JCM 3761 / NBRC 0622 / NRRL Y-65 / CBS 138) (Yeast).